Here is a 711-residue protein sequence, read N- to C-terminus: Polyribonucleotide nucleotidyltransferase (711 aa).

The Mg(2+) site is built by Asp486 and Asp492. A KH domain is found at 553–612 (PRIHTIKINPDKIKDVIGKGGSVIRALTEETGTTIEIEDDGTVKIAATDGEKAKHAIRRI). An S1 motif domain is found at 622–690 (GRVYNGKVTR…RQGRIRLSIK (69 aa)). The tract at residues 689–711 (IKEATEQSQPAAAPEAPAAEQGE) is disordered. The segment covering 694–711 (EQSQPAAAPEAPAAEQGE) has biased composition (low complexity).

This sequence belongs to the polyribonucleotide nucleotidyltransferase family. Component of the RNA degradosome, which is a multiprotein complex involved in RNA processing and mRNA degradation. Requires Mg(2+) as cofactor.

It is found in the cytoplasm. The catalysed reaction is RNA(n+1) + phosphate = RNA(n) + a ribonucleoside 5'-diphosphate. Functionally, involved in mRNA degradation. Catalyzes the phosphorolysis of single-stranded polyribonucleotides processively in the 3'- to 5'-direction. The polypeptide is Polyribonucleotide nucleotidyltransferase (Escherichia coli O6:K15:H31 (strain 536 / UPEC)).